The chain runs to 480 residues: Probable efflux pump outer membrane protein SepC (480 aa).

Residues 1-16 (MKTHYLSIALSVALSG) form the signal peptide. C17 carries the N-palmitoyl cysteine lipid modification. C17 carries S-diacylglycerol cysteine lipidation.

The protein belongs to the outer membrane factor (OMF) (TC 1.B.17) family.

It localises to the cell outer membrane. Its function is as follows. Probable outer membrane component of the SepABC efflux pump with unknown specificity. This is Probable efflux pump outer membrane protein SepC (sepC) from Pseudomonas putida (strain ATCC 700007 / DSM 6899 / JCM 31910 / BCRC 17059 / LMG 24140 / F1).